A 181-amino-acid polypeptide reads, in one-letter code: Crossover junction endodeoxyribonuclease RuvC (181 aa).

Residues aspartate 8, glutamate 67, and aspartate 139 contribute to the active site. Positions 8, 67, and 139 each coordinate Mg(2+).

It belongs to the RuvC family. As to quaternary structure, homodimer which binds Holliday junction (HJ) DNA. The HJ becomes 2-fold symmetrical on binding to RuvC with unstacked arms; it has a different conformation from HJ DNA in complex with RuvA. In the full resolvosome a probable DNA-RuvA(4)-RuvB(12)-RuvC(2) complex forms which resolves the HJ. Mg(2+) serves as cofactor.

Its subcellular location is the cytoplasm. It catalyses the reaction Endonucleolytic cleavage at a junction such as a reciprocal single-stranded crossover between two homologous DNA duplexes (Holliday junction).. Its function is as follows. The RuvA-RuvB-RuvC complex processes Holliday junction (HJ) DNA during genetic recombination and DNA repair. Endonuclease that resolves HJ intermediates. Cleaves cruciform DNA by making single-stranded nicks across the HJ at symmetrical positions within the homologous arms, yielding a 5'-phosphate and a 3'-hydroxyl group; requires a central core of homology in the junction. The consensus cleavage sequence is 5'-(A/T)TT(C/G)-3'. Cleavage occurs on the 3'-side of the TT dinucleotide at the point of strand exchange. HJ branch migration catalyzed by RuvA-RuvB allows RuvC to scan DNA until it finds its consensus sequence, where it cleaves and resolves the cruciform DNA. The protein is Crossover junction endodeoxyribonuclease RuvC of Acinetobacter baylyi (strain ATCC 33305 / BD413 / ADP1).